The sequence spans 206 residues: Large ribosomal subunit protein uL4 (206 aa).

Positions 47 to 94 (NRAQKDRSEINKSTKKPFRQKGTGRARAGRASSPLWRGGGKVFPNSPD) are disordered. The segment covering 49 to 58 (AQKDRSEINK) has biased composition (basic and acidic residues). A compositionally biased stretch (basic residues) spans 59–74 (STKKPFRQKGTGRARA).

It belongs to the universal ribosomal protein uL4 family. As to quaternary structure, part of the 50S ribosomal subunit.

Its function is as follows. One of the primary rRNA binding proteins, this protein initially binds near the 5'-end of the 23S rRNA. It is important during the early stages of 50S assembly. It makes multiple contacts with different domains of the 23S rRNA in the assembled 50S subunit and ribosome. In terms of biological role, forms part of the polypeptide exit tunnel. The chain is Large ribosomal subunit protein uL4 from Laribacter hongkongensis (strain HLHK9).